A 535-amino-acid chain; its full sequence is T-complex protein 1 subunit beta (535 aa).

The residue at position 2 (Ala-2) is an N-acetylalanine. Ser-3 bears the Phosphoserine mark. Lys-13 is subject to N6-acetyllysine. Gly-44 contributes to the ADP binding site. Gly-44 contributes to the ATP binding site. Asp-97 contributes to the Mg(2+) binding site. Residues Gly-98, Thr-99, Thr-100, Ser-101, Ser-168, and Ser-169 each contribute to the ADP site. Positions 98, 99, and 100 each coordinate ATP. Lys-181 carries the N6-acetyllysine modification. Lys-248 is covalently cross-linked (Glycyl lysine isopeptide (Lys-Gly) (interchain with G-Cter in SUMO2)). Position 260 is a phosphoserine (Ser-260). At Thr-261 the chain carries Phosphothreonine. Residues Gly-410, Glu-495, and Lys-500 each coordinate ADP. ATP is bound by residues Glu-495 and Lys-500.

This sequence belongs to the TCP-1 chaperonin family. As to quaternary structure, component of the chaperonin-containing T-complex (TRiC), a hexadecamer composed of two identical back-to-back stacked rings enclosing a protein folding chamber. Each ring is made up of eight different subunits: TCP1/CCT1, CCT2, CCT3, CCT4, CCT5, CCT6A/CCT6, CCT7, CCT8. Interacts with PACRG. Interacts with FLCN. Interacts with DLEC1. Interacts with SVEP1. The N-terminus is blocked.

Its subcellular location is the cytoplasm. The catalysed reaction is ATP + H2O = ADP + phosphate + H(+). In terms of biological role, component of the chaperonin-containing T-complex (TRiC), a molecular chaperone complex that assists the folding of actin, tubulin and other proteins upon ATP hydrolysis. The TRiC complex mediates the folding of WRAP53/TCAB1, thereby regulating telomere maintenance. As part of the TRiC complex may play a role in the assembly of BBSome, a complex involved in ciliogenesis regulating transports vesicles to the cilia. The polypeptide is T-complex protein 1 subunit beta (Cct2) (Mus musculus (Mouse)).